A 546-amino-acid chain; its full sequence is Apolipoprotein N-acyltransferase 1 (546 aa).

Helical transmembrane passes span 14 to 34 (FLLF…PLLP), 41 to 61 (AYGA…FAVV), 62 to 82 (FWGG…LFVF), 85 to 105 (VALC…CLAL), 122 to 142 (LVWL…PYGV), 151 to 171 (LPLI…LVVF), and 194 to 214 (FLSA…LCGF). The CN hydrolase domain occupies 233–502 (AKVALVQPNG…PGVLVADVPI (270 aa)). Glu280 acts as the Proton acceptor in catalysis. Lys361 is a catalytic residue. Residue Cys413 is the Nucleophile of the active site. The helical transmembrane segment at 514–534 (GDALGVFFCVASLFILIAGGV) threads the bilayer.

It belongs to the CN hydrolase family. Apolipoprotein N-acyltransferase subfamily.

It is found in the cell inner membrane. The enzyme catalyses N-terminal S-1,2-diacyl-sn-glyceryl-L-cysteinyl-[lipoprotein] + a glycerophospholipid = N-acyl-S-1,2-diacyl-sn-glyceryl-L-cysteinyl-[lipoprotein] + a 2-acyl-sn-glycero-3-phospholipid + H(+). It participates in protein modification; lipoprotein biosynthesis (N-acyl transfer). Functionally, catalyzes the phospholipid dependent N-acylation of the N-terminal cysteine of apolipoprotein, the last step in lipoprotein maturation. The polypeptide is Apolipoprotein N-acyltransferase 1 (Treponema pallidum (strain Nichols)).